We begin with the raw amino-acid sequence, 136 residues long: Protein NrdI (136 aa).

The protein belongs to the NrdI family.

Its function is as follows. Probably involved in ribonucleotide reductase function. In Salmonella newport (strain SL254), this protein is Protein NrdI.